The following is a 233-amino-acid chain: Fibrillarin-like rRNA/tRNA 2'-O-methyltransferase (233 aa).

Residues 90–91 (TT), 109–110 (EF), 134–135 (DA), and 154–157 (DVAQ) each bind S-adenosyl-L-methionine.

The protein belongs to the methyltransferase superfamily. Fibrillarin family. Interacts with nop5. Component of box C/D small ribonucleoprotein (sRNP) particles that contain rpl7ae, FlpA and nop5, plus a guide RNA.

Its function is as follows. Involved in pre-rRNA and tRNA processing. Utilizes the methyl donor S-adenosyl-L-methionine to catalyze the site-specific 2'-hydroxyl methylation of ribose moieties in rRNA and tRNA. Site specificity is provided by a guide RNA that base pairs with the substrate. Methylation occurs at a characteristic distance from the sequence involved in base pairing with the guide RNA. This Aeropyrum pernix (strain ATCC 700893 / DSM 11879 / JCM 9820 / NBRC 100138 / K1) protein is Fibrillarin-like rRNA/tRNA 2'-O-methyltransferase.